The chain runs to 405 residues: Acetylornithine aminotransferase 1 (405 aa).

Pyridoxal 5'-phosphate is bound by residues 108 to 109 (GA) and phenylalanine 141. N(2)-acetyl-L-ornithine is bound at residue arginine 144. Position 226–229 (226–229 (DEVQ)) interacts with pyridoxal 5'-phosphate. Lysine 255 is subject to N6-(pyridoxal phosphate)lysine. Residue threonine 283 coordinates N(2)-acetyl-L-ornithine. Threonine 284 lines the pyridoxal 5'-phosphate pocket.

The protein belongs to the class-III pyridoxal-phosphate-dependent aminotransferase family. ArgD subfamily. Homodimer. Pyridoxal 5'-phosphate serves as cofactor.

The protein resides in the cytoplasm. It catalyses the reaction N(2)-acetyl-L-ornithine + 2-oxoglutarate = N-acetyl-L-glutamate 5-semialdehyde + L-glutamate. The protein operates within amino-acid biosynthesis; L-arginine biosynthesis; N(2)-acetyl-L-ornithine from L-glutamate: step 4/4. The sequence is that of Acetylornithine aminotransferase 1 from Pseudomonas syringae pv. tomato (strain ATCC BAA-871 / DC3000).